The primary structure comprises 188 residues: Pterocarpan synthase 1 (188 aa).

The N-terminal stretch at 1-23 (MAKSTTFFISLTLPFLLLSVVTA) is a signal peptide. N-linked (GlcNAc...) asparagine glycosylation is present at asparagine 127.

The protein belongs to the plant dirigent protein family. Homodimer.

It localises to the secreted. The protein localises to the extracellular space. The protein resides in the apoplast. The enzyme catalyses a (4R)-4,2'-dihydroxyisoflavan = a pterocarpan + H2O.. The catalysed reaction is (3R,4R)-7,2'-dihydroxy-4'-methoxyisoflavanol = (-)-medicarpin + H2O. It carries out the reaction (3S,4R)-7,2'-dihydroxy-4'-methoxyisoflavanol = (+)-medicarpin + H2O. It catalyses the reaction (3R,4R)-3-(6-hydroxy-1,3-benzodioxol-5-yl)-3,4-dihydro-2H-chromene-4,7-diol = (-)-maackiain + H2O. The enzyme catalyses (3R,4R)-7,2',4'-trihydroxyisoflavanol = (6aR,11aR)-3,9-dihydroxypterocarpan + H2O. Its function is as follows. Involved in pterocarpan phytoalexin biosynthesis. Catalyzes the last step in the biosynthesis of the phytoalexin medicarpin, and thereby contributes to plant defense reactions. Dirigent proteins impart stereoselectivity on the phenoxy radical-coupling reaction, yielding optically active lignans from two molecules of coniferyl alcohol in the biosynthesis of lignans, flavonolignans, and alkaloids and thus plays a central role in plant secondary metabolism. In Glycyrrhiza echinata (Licorice), this protein is Pterocarpan synthase 1.